The following is a 116-amino-acid chain: Phosphoribosyl-ATP pyrophosphatase (116 aa).

This sequence belongs to the PRA-PH family.

The protein resides in the cytoplasm. The enzyme catalyses 1-(5-phospho-beta-D-ribosyl)-ATP + H2O = 1-(5-phospho-beta-D-ribosyl)-5'-AMP + diphosphate + H(+). It participates in amino-acid biosynthesis; L-histidine biosynthesis; L-histidine from 5-phospho-alpha-D-ribose 1-diphosphate: step 2/9. The chain is Phosphoribosyl-ATP pyrophosphatase from Nitrobacter winogradskyi (strain ATCC 25391 / DSM 10237 / CIP 104748 / NCIMB 11846 / Nb-255).